Consider the following 448-residue polypeptide: Na(+)-malate symporter (448 aa).

A run of 11 helical transmembrane segments spans residues 31-51, 60-80, 86-106, 123-143, 153-173, 182-202, 214-234, 276-293, 297-319, 333-353, and 359-379; these read IGVIPLPLYTVLAVIIILAAY, LGGFAIIMILGVFLGDIGQRI, IGGPAILSLFVPSFLVFYNVL, FLYFYIACLVVGSILGMNRIV, VPLVAGTIAAVAAGILVGFIF, FFVVVPIIAGGIGEGILPLSI, VFVSQLVPAAIIGNVFAIICA, LMGAGVLLACTFFIFGGL, FIFIPGAILMIISAAAVKYANIL, FISSSFTWPLMVGLGILFIPL, and VISIPFVIICISVVIAMIGSG.

It belongs to the 2-hydroxycarboxylate transporter (2-HCT) (TC 2.A.24) family.

It localises to the cell membrane. Its function is as follows. Acts as a Na(+)-malate symporter, as it catalyzes malate-dependent uptake of Na(+) and Na(+)-dependent uptake of malate. In Bacillus subtilis (strain 168), this protein is Na(+)-malate symporter.